A 136-amino-acid chain; its full sequence is uncharacterized protein (136 aa).

This is an uncharacterized protein from Methanocaldococcus jannaschii (strain ATCC 43067 / DSM 2661 / JAL-1 / JCM 10045 / NBRC 100440) (Methanococcus jannaschii).